The chain runs to 442 residues: UDP-glycosyltransferase 78D4 (442 aa).

Residues 322-324 (APQ), 339-347 (HGGWNSVLE), and 361-364 (FGDH) each bind UDP-alpha-D-glucose.

This sequence belongs to the UDP-glycosyltransferase family.

This chain is UDP-glycosyltransferase 78D4 (UGT78D4), found in Arabidopsis thaliana (Mouse-ear cress).